We begin with the raw amino-acid sequence, 324 residues long: Aldo-keto reductase family 1 member C15 (324 aa).

NADP(+)-binding positions include 24-26 (TFA) and D51. Y56 (proton donor) is an active-site residue. Residue H118 coordinates substrate. NADP(+)-binding positions include 167 to 168 (SN), Q191, 217 to 225 (YSALGSHRD), and 269 to 281 (LAKSFNEKRIKEN).

Belongs to the aldo/keto reductase family. In terms of assembly, monomer. Expressed in lung, specifically in bronchiolar club cells, type II alveolar cells and epithelial cells of the duct of the bronchial gland (at protein level). Expressed in gastric parietal cells and in epithelial cells of the large intestine and colon (at protein level). Expressed in brown adipocytes (at protein level). Expressed in vascular endothelial cells (at protein level).

The protein localises to the cytoplasm. The enzyme catalyses (2E,6E)-farnesol + NADP(+) = (2E,6E)-farnesal + NADPH + H(+). Its activity is regulated as follows. The dehydrogenase activity is inhibited by 3',3'',5',5''-tetraiodophenolphthalein, phenolphthalein, genistein, quercetin, zearalenone and diethylstilbestrol. Functionally, catalyzes the NADPH-dependent reduction of a variety of substrates including aromatic and aliphatic aldehydes, quinones, ketones, dicarbonyl compounds and 17-ketosteroids. Catalyzes the NADP(+)-dependent oxidation of aromatic, alicyclic and aliphatic alcohols, and 17beta-hydroxysteroids. To a lesser extent, can also catalyze the reduction of some aldoses and ketoses and the oxidation of some sugar alcohols. In the stomach, lung and colon tissues, mediates the reduction of farnesal and geranylgeranial into farnesol and geranylgeraniol respectively. By reducing 4-hydroxy-2-nonenal (HNE), produced during lipid peroxidation, into 1,4-dihydro-2-nonene (DHN), protects vascular endothelial cells from damage elicited by oxidized lipoproteins. In Rattus norvegicus (Rat), this protein is Aldo-keto reductase family 1 member C15.